Reading from the N-terminus, the 164-residue chain is Peroxynitrite isomerase (164 aa).

The GXWXGXG signature appears at 21–27; it reads GRWGGRG. Positions 130 and 156 each coordinate heme b.

Belongs to the nitrobindin family. As to quaternary structure, homodimer. Heme b serves as cofactor.

The catalysed reaction is peroxynitrite = nitrate. The protein operates within nitrogen metabolism. In terms of biological role, heme-binding protein able to scavenge peroxynitrite and to protect free L-tyrosine against peroxynitrite-mediated nitration, by acting as a peroxynitrite isomerase that converts peroxynitrite to nitrate. Therefore, this protein likely plays a role in peroxynitrite sensing and in the detoxification of reactive nitrogen and oxygen species (RNS and ROS, respectively). Is able to bind nitric oxide (NO) in vitro, but may act as a sensor of peroxynitrite levels in vivo. The sequence is that of Peroxynitrite isomerase from Nocardioides sp. (strain ATCC BAA-499 / JS614).